The sequence spans 177 residues: Chorismate pyruvate-lyase (177 aa).

Substrate is bound by residues Met-36, Arg-78, Leu-116, and Glu-157.

Belongs to the UbiC family. Monomer.

It localises to the cytoplasm. The enzyme catalyses chorismate = 4-hydroxybenzoate + pyruvate. It functions in the pathway cofactor biosynthesis; ubiquinone biosynthesis. Removes the pyruvyl group from chorismate, with concomitant aromatization of the ring, to provide 4-hydroxybenzoate (4HB) for the ubiquinone pathway. The protein is Chorismate pyruvate-lyase of Pectobacterium carotovorum subsp. carotovorum (strain PC1).